The following is an 89-amino-acid chain: Large ribosomal subunit protein bL27 (89 aa).

A disordered region spans residues 1–21 (MAHKKAGGSSRNGRDSAGRRL).

Belongs to the bacterial ribosomal protein bL27 family.

This Erythrobacter litoralis (strain HTCC2594) protein is Large ribosomal subunit protein bL27.